The chain runs to 244 residues: Mannose-binding protein C (244 aa).

An N-terminal signal peptide occupies residues 1–18; the sequence is MSLFTSFLLLCVLTAVYA. One can recognise a Collagen-like domain in the interval 38–96; sequence GLNGFPGKDGHDGAKGEKGEPGQGLRGLQGPPGKVGPAGPPGNPGSKGATGPKGDRGES. P43 bears the 4-hydroxyproline mark. The disordered stretch occupies residues 43-99; sequence PGKDGHDGAKGEKGEPGQGLRGLQGPPGKVGPAGPPGNPGSKGATGPKGDRGESVEF. Positions 45–57 are enriched in basic and acidic residues; it reads KDGHDGAKGEKGE. A 4-hydroxyproline mark is found at P58, P69, P78, and P81. Residues 65-74 are compositionally biased toward low complexity; that stretch reads LQGPPGKVGP. A coiled-coil region spans residues 108 to 126; it reads IAALRSELRAMRKWVLLSM. The C-type lectin domain occupies 129-241; that stretch reads NVGKKYFMSS…CSDSFLVVCE (113 aa). Disulfide bonds link C151/C240 and C218/C232.

In terms of assembly, oligomeric complex of 3 or more homotrimers. Interacts with MASP1 and MASP2. Interacts with MEP1A and MEP1B and may inhibit their catalytic activity.

Its subcellular location is the secreted. Calcium-dependent lectin involved in innate immune defense. Binds mannose, fucose and N-acetylglucosamine on different microorganisms and activates the lectin complement pathway. Binds to late apoptotic cells, as well as to apoptotic blebs and to necrotic cells, but not to early apoptotic cells, facilitating their uptake by macrophages. This is Mannose-binding protein C (Mbl2) from Rattus norvegicus (Rat).